Here is a 53-residue protein sequence, read N- to C-terminus: Temporin-SHd (53 aa).

The signal sequence occupies residues 1–10 (FLGTINLSLC). A propeptide spanning residues 11 to 34 (EQERDADEEKRDEPDESDVEVEKR) is cleaved from the precursor. The residue at position 51 (Phe-51) is a Phenylalanine amide.

It localises to the secreted. Its subcellular location is the target cell membrane. In terms of biological role, non-amphipathic mildly cationic alpha-helical antimicrobial peptide with potent activity against Gram-positive (including methicillin-resistant Staphylococcus aureus (MRSA)) and Gram-negative bacteria, and some fungi, as well as against Trypanosoma and Leishmania (both promastigote and amastigote forms). Strongly and selectively perturbs anionic bilayer membranes by interacting with the polar head groups and acyl region of the phospholipids, with formation of regions of two coexisting phases, one phase rich in peptide and the other lipid-rich. Shows low hemolytic activity (LC(50)=44 uM) and a low toxicity for human monocytes THP-1 and THP-1-derived macrophages. Is not toxic to human hepatoma-derived cells. This chain is Temporin-SHd, found in Pelophylax saharicus (Sahara frog).